The sequence spans 148 residues: uncharacterized protein (148 aa).

Residues 1–16 (MDVLFIALLVAPLILG) form the signal peptide. An N-linked (GlcNAc...) asparagine glycan is attached at asparagine 50. Positions 91–125 (MDPQNPVTTKPVTTEPVTTEPVTTEPQSPNQNDAM) are disordered. The span at 96 to 116 (PVTTKPVTTEPVTTEPVTTEP) shows a compositional bias: low complexity.

The protein localises to the secreted. This is an uncharacterized protein from Mus musculus (Mouse).